Here is a 382-residue protein sequence, read N- to C-terminus: Methenyltetrahydrofolate synthase domain-containing protein (382 aa).

One can recognise an RRM domain in the interval 306-382; it reads TTVYLSDIPP…QAKCVSSQKM (77 aa).

This Danio rerio (Zebrafish) protein is Methenyltetrahydrofolate synthase domain-containing protein (mthfsd).